Consider the following 511-residue polypeptide: Cytochrome P450 89A9 (511 aa).

Residues 6–26 (IIFLIISSLTFSIFLKLIFFF) traverse the membrane as a helical; Signal-anchor for type II membrane protein segment. Residue Cys454 coordinates heme.

The protein belongs to the cytochrome P450 family. Requires heme as cofactor.

It is found in the endoplasmic reticulum membrane. The catalysed reaction is primary fluorescent chlorophyll catabolite + reduced [NADPH--hemoprotein reductase] + O2 = primary fluorescent dioxobilin-type chlorophyll catabolite + formate + oxidized [NADPH--hemoprotein reductase] + 2 H(+). Its pathway is porphyrin-containing compound metabolism; chlorophyll degradation. Functionally, involved in the chlorophyll breakdown by its action in nonpolar primary fluorescent chlorophyll catabolite (pFCC) decarbonylation. Involved in the formation of major chlorophyll breakdown products, including non-fluorescent dioxobilin-type chlorophyll catabolites (NDCCs), during leaf senescence. This Arabidopsis thaliana (Mouse-ear cress) protein is Cytochrome P450 89A9.